A 437-amino-acid polypeptide reads, in one-letter code: Nickel-cobalt-cadmium resistance protein NccC (437 aa).

The first 48 residues, 1-48 (MGAVLKAEANIFRSHPFRPMNQATPKKLRSAPCIGVALLLMATGSIQA), serve as a signal peptide directing secretion.

This sequence belongs to the outer membrane factor (OMF) (TC 1.B.17) family.

Its function is as follows. Component of the NCC cation-efflux system that confers resistance to nickel, cobalt and cadmium. This chain is Nickel-cobalt-cadmium resistance protein NccC (nccC), found in Alcaligenes xylosoxydans xylosoxydans (Achromobacter xylosoxidans).